The sequence spans 121 residues: Immunoglobulin kappa variable 4-1 (121 aa).

The first 20 residues, 1 to 20 (MVLQTQVFISLLLWISGAYG), serve as a signal peptide directing secretion. The segment at 21–43 (DIVMTQSPDSLAVSLGERATINC) is framework-1. The Ig-like domain occupies 21 to 121 (DIVMTQSPDS…YYCQQYYSTP (101 aa)). A disulfide bridge connects residues Cys-43 and Cys-114. The tract at residues 44 to 60 (KSSQSVLYSSNNKNYLA) is complementarity-determining-1. Residues 61–75 (WYQQKPGQPPKLLIY) form a framework-2 region. The segment at 76 to 82 (WASTRES) is complementarity-determining-2. The tract at residues 83 to 114 (GVPDRFSGSGSGTDFTLTISSLQAEDVAVYYC) is framework-3. The segment at 115 to 121 (QQYYSTP) is complementarity-determining-3.

As to quaternary structure, immunoglobulins are composed of two identical heavy chains and two identical light chains; disulfide-linked.

The protein resides in the secreted. Its subcellular location is the cell membrane. In terms of biological role, v segment of the variable domain of immunoglobulins light chain that participates in the antigen recognition. Immunoglobulins, also known as antibodies, are membrane-bound or secreted glycoproteins produced by B lymphocytes. In the recognition phase of humoral immunity, the membrane-bound immunoglobulins serve as receptors which, upon binding of a specific antigen, trigger the clonal expansion and differentiation of B lymphocytes into immunoglobulins-secreting plasma cells. Secreted immunoglobulins mediate the effector phase of humoral immunity, which results in the elimination of bound antigens. The antigen binding site is formed by the variable domain of one heavy chain, together with that of its associated light chain. Thus, each immunoglobulin has two antigen binding sites with remarkable affinity for a particular antigen. The variable domains are assembled by a process called V-(D)-J rearrangement and can then be subjected to somatic hypermutations which, after exposure to antigen and selection, allow affinity maturation for a particular antigen. The polypeptide is Immunoglobulin kappa variable 4-1 (Homo sapiens (Human)).